The following is a 483-amino-acid chain: Probable glycine dehydrogenase (decarboxylating) subunit 2 (483 aa).

Lys264 is modified (N6-(pyridoxal phosphate)lysine).

This sequence belongs to the GcvP family. C-terminal subunit subfamily. The glycine cleavage system is composed of four proteins: P, T, L and H. In this organism, the P 'protein' is a heterodimer of two subunits. The cofactor is pyridoxal 5'-phosphate.

The enzyme catalyses N(6)-[(R)-lipoyl]-L-lysyl-[glycine-cleavage complex H protein] + glycine + H(+) = N(6)-[(R)-S(8)-aminomethyldihydrolipoyl]-L-lysyl-[glycine-cleavage complex H protein] + CO2. Functionally, the glycine cleavage system catalyzes the degradation of glycine. The P protein binds the alpha-amino group of glycine through its pyridoxal phosphate cofactor; CO(2) is released and the remaining methylamine moiety is then transferred to the lipoamide cofactor of the H protein. The protein is Probable glycine dehydrogenase (decarboxylating) subunit 2 of Nitrosomonas eutropha (strain DSM 101675 / C91 / Nm57).